Consider the following 199-residue polypeptide: MVKMLVLYYSAYGYMEQMAKAAAEGAREGGAEVTLKRVPELVPEEVAKASHYKIDQEAPIATPGELADYDAIIIGTATRYGMMASQMKNFLDQTGGLWAKGALINKVGSVMVSTATQHGGAELALISTQWQMQHHGMIIVPLSYACREQMGNDVVRGGAPYGMTTTADGDGSRQPSAQELDGARFQGRRVAEITAKLHG.

Residues 4-190 enclose the Flavodoxin-like domain; sequence MLVLYYSAYG…DGARFQGRRV (187 aa). FMN contacts are provided by residues 10-15 and 78-80; these read SAYGYM and TRY. Tyr-12 contacts NAD(+). Trp-98 contributes to the substrate binding site. FMN contacts are provided by residues 113–119 and His-134; that span reads STATQHG. The disordered stretch occupies residues 157 to 181; that stretch reads GGAPYGMTTTADGDGSRQPSAQELD. A compositionally biased stretch (polar residues) spans 163–177; sequence MTTTADGDGSRQPSA.

This sequence belongs to the WrbA family. FMN is required as a cofactor.

It carries out the reaction a quinone + NADH + H(+) = a quinol + NAD(+). The enzyme catalyses a quinone + NADPH + H(+) = a quinol + NADP(+). This is NAD(P)H dehydrogenase (quinone) from Brucella melitensis biotype 2 (strain ATCC 23457).